The primary structure comprises 460 residues: tRNA modification GTPase MnmE (460 aa).

(6S)-5-formyl-5,6,7,8-tetrahydrofolate contacts are provided by Arg-29, Glu-91, and Lys-132. Residues 227–383 (GISIALIGKT…LIDTIIKKCG (157 aa)) enclose the TrmE-type G domain. Asn-237 is a binding site for K(+). Residues 237-242 (NVGKSS), 256-262 (TNIPGTT), and 281-284 (DTAG) contribute to the GTP site. Ser-241 is a Mg(2+) binding site. K(+)-binding residues include Thr-256, Ile-258, and Thr-261. Residue Thr-262 coordinates Mg(2+). Lys-460 contributes to the (6S)-5-formyl-5,6,7,8-tetrahydrofolate binding site.

This sequence belongs to the TRAFAC class TrmE-Era-EngA-EngB-Septin-like GTPase superfamily. TrmE GTPase family. Homodimer. Heterotetramer of two MnmE and two MnmG subunits. K(+) is required as a cofactor.

Its subcellular location is the cytoplasm. Exhibits a very high intrinsic GTPase hydrolysis rate. Involved in the addition of a carboxymethylaminomethyl (cmnm) group at the wobble position (U34) of certain tRNAs, forming tRNA-cmnm(5)s(2)U34. In Prochlorococcus marinus (strain MIT 9312), this protein is tRNA modification GTPase MnmE.